The following is a 300-amino-acid chain: UPF0761 membrane protein PSHAa0171 (300 aa).

The next 6 helical transmembrane spans lie at 47 to 67 (LLSLVPLIAVGVAIFSAFPGF), 100 to 120 (NANQMTAVGIGFLAAIALLLI), 143 to 163 (FAVYWMVLSLGPVFLGGSIAV), 181 to 201 (FSGFLLKLLPYGISMVGFIML), 215 to 235 (AIPGALFAAMLFELTKKGFAL), and 249 to 269 (AVATIPILFVWIYLSWIVVLL).

It belongs to the UPF0761 family.

The protein resides in the cell inner membrane. The chain is UPF0761 membrane protein PSHAa0171 from Pseudoalteromonas translucida (strain TAC 125).